A 185-amino-acid chain; its full sequence is Avirulence protein ATR39-1 (185 aa).

A signal peptide spans 1–20 (MVKCTPLLALTVIVSAGSDA). The RxLR-dEER signature appears at 49-66 (RVLRASDVPDEVAAGESR).

This sequence belongs to the RxLR effector family.

Its subcellular location is the secreted. It is found in the host cell. Its function is as follows. Secreted effector that acts as an elicitor of hypersensitive response (HR) specifically on plants carrying defense protein RPP39. The allele ATR39-1 is recognized by RPP39, whereas the ATR39-2 allele is not recognized. This is Avirulence protein ATR39-1 from Hyaloperonospora arabidopsidis (strain Emoy2) (Downy mildew agent).